Consider the following 121-residue polypeptide: Small ribosomal subunit protein uS13 (121 aa).

The disordered stretch occupies residues 93-121 (RGLPVRGQNTKNNARTRKGPRRTVANKKK). The span at 106–121 (ARTRKGPRRTVANKKK) shows a compositional bias: basic residues.

Belongs to the universal ribosomal protein uS13 family. As to quaternary structure, part of the 30S ribosomal subunit. Forms a loose heterodimer with protein S19. Forms two bridges to the 50S subunit in the 70S ribosome.

Functionally, located at the top of the head of the 30S subunit, it contacts several helices of the 16S rRNA. In the 70S ribosome it contacts the 23S rRNA (bridge B1a) and protein L5 of the 50S subunit (bridge B1b), connecting the 2 subunits; these bridges are implicated in subunit movement. Contacts the tRNAs in the A and P-sites. The polypeptide is Small ribosomal subunit protein uS13 (Bacillus licheniformis (strain ATCC 14580 / DSM 13 / JCM 2505 / CCUG 7422 / NBRC 12200 / NCIMB 9375 / NCTC 10341 / NRRL NRS-1264 / Gibson 46)).